A 503-amino-acid chain; its full sequence is Hemogen (503 aa).

Basic residues-rich tracts occupy residues 1-10 (MDMGKGRPRL) and 61-79 (KKRK…RKRQ). The disordered stretch occupies residues 1-129 (MDMGKGRPRL…PLVPSPTKAV (129 aa)). The necessary for nuclear localization stretch occupies residues 7-87 (RPRLKLPQMP…RQGNVEQKAE (81 aa)). Ser-90, Ser-103, Ser-124, Ser-153, Ser-158, Ser-171, Ser-213, Ser-223, Ser-228, Ser-241, and Ser-269 each carry phosphoserine. The residue at position 286 (Thr-286) is a Phosphothreonine. Residues 381 to 503 (QKTIQESPEP…ENGIYSSALF (123 aa)) are disordered. Over residues 385-396 (QESPEPEQYSPE) the composition is skewed to low complexity. Phosphoserine occurs at positions 387 and 394. The segment covering 426 to 436 (CQDREEPKHSL) has biased composition (basic and acidic residues).

Expressed in hematopoietic precursor cells. Highly expressed in bone marrow, the red pulp of the spleen and round spermatids. Weakly expressed in peripheral blood cells.

It is found in the nucleus. Its function is as follows. Regulates the proliferation and differentiation of hematopoietic cells. Overexpression block the TPA-induced megakaryocytic differentiation in the K562 cell model. May also prevent cell apoptosis through the activation of the nuclear factor-kappa B (NF-kB). The polypeptide is Hemogen (Hemgn) (Mus musculus (Mouse)).